A 138-amino-acid chain; its full sequence is Small ribosomal subunit protein uS9c (138 aa).

The protein belongs to the universal ribosomal protein uS9 family.

The protein resides in the plastid. The protein localises to the chloroplast. The polypeptide is Small ribosomal subunit protein uS9c (rps9) (Trieres chinensis (Marine centric diatom)).